A 609-amino-acid polypeptide reads, in one-letter code: (R)-linalool synthase TPS5, chloroplastic (609 aa).

A chloroplast-targeting transit peptide spans 1–42; sequence MVSILSNIGMMVVTFKRPSLFTSLRRRSANNIIITKHSHPIS. 5 residues coordinate (2E)-geranyl diphosphate: R325, D362, D366, R503, and D506. 2 residues coordinate Mg(2+): D362 and D366. The short motif at 362 to 366 is the DDXXD motif element; sequence DDIYD. Residues D506, T510, and E514 each contribute to the Mg(2+) site.

It belongs to the terpene synthase family. Tpsb subfamily. Mg(2+) is required as a cofactor. Mn(2+) serves as cofactor. In terms of tissue distribution, highly expressed in young fruits and plant tops. Expressed in flower buds and trichomes of petioles and stems. Expressed at low levels in young leaves, stems, petioles, sepals and petals.

It localises to the plastid. The protein resides in the chloroplast. The catalysed reaction is (2E)-geranyl diphosphate + H2O = (R)-linalool + diphosphate. It catalyses the reaction (2E,6E)-farnesyl diphosphate + H2O = (6E)-nerolidol + diphosphate. It functions in the pathway secondary metabolite biosynthesis; terpenoid biosynthesis. In terms of biological role, involved in monoterpene (C10) biosynthesis in glandular trichomes. Converts geranyl diphosphate to linalool in glandular trichomes in response to jasmonate (JA). Can convert farnesyl diphosphate to nerolidol in vitro. The sequence is that of (R)-linalool synthase TPS5, chloroplastic from Solanum lycopersicum (Tomato).